The chain runs to 652 residues: Coiled-coil domain-containing protein 81 (652 aa).

Ser-206 carries the phosphoserine modification. Residues 238–256 are compositionally biased toward basic and acidic residues; the sequence is KCKLKDQSDKEEGTRDISS. Positions 238–258 are disordered; it reads KCKLKDQSDKEEGTRDISSPK. 3 positions are modified to phosphoserine: Ser-275, Ser-296, and Ser-417. The stretch at 436–493 forms a coiled coil; the sequence is MDNRQENEIKQRQYRELMDRLEQVQLTEELAAQRAKFLKDKMEETQCYKRALDAQIKN.

The protein localises to the cytoplasm. It is found in the cytoskeleton. The protein resides in the microtubule organizing center. Its subcellular location is the centrosome. This chain is Coiled-coil domain-containing protein 81 (CCDC81), found in Homo sapiens (Human).